A 42-amino-acid chain; its full sequence is Cytochrome b6-f complex subunit 7 (42 aa).

The helical transmembrane segment at 19–37 threads the bilayer; sequence AVTCIFMTLFGLSLGFALL.

Belongs to the PetM family. The 4 large subunits of the cytochrome b6-f complex are cytochrome b6, subunit IV (17 kDa polypeptide, PetD), cytochrome f and the Rieske protein, while the 4 small subunits are PetG, PetL, PetM and PetN. The complex functions as a dimer.

The protein localises to the plastid. Its subcellular location is the chloroplast thylakoid membrane. Its function is as follows. Component of the cytochrome b6-f complex, which mediates electron transfer between photosystem II (PSII) and photosystem I (PSI), cyclic electron flow around PSI, and state transitions. This Thalassiosira pseudonana (Marine diatom) protein is Cytochrome b6-f complex subunit 7.